We begin with the raw amino-acid sequence, 962 residues long: Translation initiation factor IF-2 (962 aa).

Residues 101–366 (AAQTQAAPVR…KKGKKLKLEP (266 aa)) are disordered. Positions 117–141 (DAAKARAEAATRAEARAKAEAEAAK) are enriched in basic and acidic residues. The span at 145 to 157 (AKAGNKAKPAAQK) shows a compositional bias: low complexity. The segment covering 173 to 216 (KPAEESKAEKAQADKMPSKKPAEPKEKAAKPKHERNGKGKDAKK) has biased composition (basic and acidic residues). The segment covering 219 to 234 (KPAAPAVPQPVVSAEE) has biased composition (low complexity). A compositionally biased stretch (basic and acidic residues) spans 235–269 (QAQRDEEARRAAALRAHQEALLKEKQERQARREAM). Low complexity predominate over residues 270-283 (KQQAEQQAKAAQEA). The segment covering 338–354 (GGRDRNNARNGDDERVR) has biased composition (basic and acidic residues). Residues 462-631 (PRPPVVTVMG…LLEAEVLELT (170 aa)) form the tr-type G domain. Positions 471 to 478 (GHVDHGKT) are G1. 471–478 (GHVDHGKT) serves as a coordination point for GTP. Residues 496–500 (GITQH) are G2. Residues 517–520 (DTPG) form a G3 region. GTP is bound by residues 517–521 (DTPGH) and 571–574 (NKID). Residues 571–574 (NKID) are G4. A G5 region spans residues 607–609 (SAK).

This sequence belongs to the TRAFAC class translation factor GTPase superfamily. Classic translation factor GTPase family. IF-2 subfamily.

Its subcellular location is the cytoplasm. In terms of biological role, one of the essential components for the initiation of protein synthesis. Protects formylmethionyl-tRNA from spontaneous hydrolysis and promotes its binding to the 30S ribosomal subunits. Also involved in the hydrolysis of GTP during the formation of the 70S ribosomal complex. The protein is Translation initiation factor IF-2 of Neisseria meningitidis serogroup A / serotype 4A (strain DSM 15465 / Z2491).